Reading from the N-terminus, the 246-residue chain is 1-(5-phosphoribosyl)-5-[(5-phosphoribosylamino)methylideneamino] imidazole-4-carboxamide isomerase (246 aa).

Residue Asp8 is the Proton acceptor of the active site. Asp130 functions as the Proton donor in the catalytic mechanism.

This sequence belongs to the HisA/HisF family.

Its subcellular location is the cytoplasm. The catalysed reaction is 1-(5-phospho-beta-D-ribosyl)-5-[(5-phospho-beta-D-ribosylamino)methylideneamino]imidazole-4-carboxamide = 5-[(5-phospho-1-deoxy-D-ribulos-1-ylimino)methylamino]-1-(5-phospho-beta-D-ribosyl)imidazole-4-carboxamide. Its pathway is amino-acid biosynthesis; L-histidine biosynthesis; L-histidine from 5-phospho-alpha-D-ribose 1-diphosphate: step 4/9. The sequence is that of 1-(5-phosphoribosyl)-5-[(5-phosphoribosylamino)methylideneamino] imidazole-4-carboxamide isomerase from Hydrogenovibrio crunogenus (strain DSM 25203 / XCL-2) (Thiomicrospira crunogena).